A 228-amino-acid chain; its full sequence is Clathrin light chain B (228 aa).

Met-1 is subject to Blocked amino end (Met). A compositionally biased stretch (low complexity) spans 1–17 (MADDFGFFSSSESGAPE). Positions 1–80 (MADDFGFFSS…VNGDVFQEAN (80 aa)) are disordered. A phosphoserine mark is found at Ser-11 and Ser-13. Residues 92–154 (ADRLTQEPES…QVEKNKINNR (63 aa)) form an involved in binding clathrin heavy chain region. Thr-186 is modified (phosphothreonine). Cys-198 and Cys-208 are oxidised to a cystine. An N6-acetyllysine modification is found at Lys-203. Ser-216 is modified (phosphoserine).

Belongs to the clathrin light chain family. Clathrin coats are formed from molecules containing 3 heavy chains and 3 light chains. Interacts (via N-terminus) with HIP1. Interacts with HIP1R.

Its subcellular location is the cytoplasmic vesicle membrane. The protein localises to the membrane. It is found in the coated pit. Functionally, clathrin is the major protein of the polyhedral coat of coated pits and vesicles. The protein is Clathrin light chain B (CLTB) of Bos taurus (Bovine).